The sequence spans 234 residues: LRP chaperone MESD (234 aa).

Residues 1–33 (MAASRWARKAVVLLCASDLLLLLLLLPPPGSCA) form the signal peptide. The interval 1 to 164 (MAASRWARKA…DRAIFMLRDG (164 aa)) is chaperone domain. 2 disordered regions span residues 31-95 (SCAA…DFSK) and 187-234 (GQVY…REDL). Residues 54–70 (DIRDYNDADMARLLEQW) are compositionally biased toward basic and acidic residues. The span at 71-80 (EKDDDIEEGD) shows a compositional bias: acidic residues. Residues 165–204 (SYAWEIKDFLVGQDRCADVTLEGQVYPGKGGGSKEKNKTK) are escort domain. The segment covering 196-234 (GSKEKNKTKQDKGKKKKEGDLKSRSSKEENRAGNKREDL) has biased composition (basic and acidic residues). An N-linked (GlcNAc...) asparagine glycan is attached at asparagine 201. The short motif at 231-234 (REDL) is the Prevents secretion from ER element.

This sequence belongs to the MESD family. Monomer. Interacts with LRP5; the interaction prevents LRP5 from forming aggregates and chaperones LRP6 to the plasma membrane. Interacts with LRP6; the interaction prevents LRP6 from forming aggregates and chaperones LRP6 to the plasma membrane. Interacts with LRP4; the interaction promotes glycosylation of LRP4 and its cell-surface expression.

It localises to the endoplasmic reticulum. Its function is as follows. Chaperone specifically assisting the folding of beta-propeller/EGF modules within the family of low-density lipoprotein receptors (LDLRs). Acts as a modulator of the Wnt pathway through chaperoning the coreceptors of the canonical Wnt pathway, LRP5 and LRP6, to the plasma membrane. Essential for specification of embryonic polarity and mesoderm induction. Plays an essential role in neuromuscular junction (NMJ) formation by promoting cell-surface expression of LRP4. May regulate phagocytosis of apoptotic retinal pigment epithelium (RPE) cells. This chain is LRP chaperone MESD, found in Homo sapiens (Human).